A 156-amino-acid chain; its full sequence is Small ribosomal subunit protein uS7 (156 aa).

This sequence belongs to the universal ribosomal protein uS7 family. In terms of assembly, part of the 30S ribosomal subunit. Contacts proteins S9 and S11.

Its function is as follows. One of the primary rRNA binding proteins, it binds directly to 16S rRNA where it nucleates assembly of the head domain of the 30S subunit. Is located at the subunit interface close to the decoding center, probably blocks exit of the E-site tRNA. The protein is Small ribosomal subunit protein uS7 of Clostridium novyi (strain NT).